The chain runs to 2710 residues: Serine/threonine-protein kinase ATR (2710 aa).

In terms of domain architecture, FAT spans Thr1647–Ser2257. Residues Ile2368 to Leu2680 form the PI3K/PI4K catalytic domain. A G-loop region spans residues Ile2374–Lys2380. The interval Gly2545–Asn2553 is catalytic loop. Residues His2565–Thr2589 are activation loop. Residues Leu2678 to Phe2710 form the FATC domain.

It belongs to the PI3/PI4-kinase family. ATM subfamily.

Its subcellular location is the nucleus. It carries out the reaction L-seryl-[protein] + ATP = O-phospho-L-seryl-[protein] + ADP + H(+). The catalysed reaction is L-threonyl-[protein] + ATP = O-phospho-L-threonyl-[protein] + ADP + H(+). Functionally, probable serine/threonine kinase. Seems to play a central role in cell-cycle regulation by transmitting DNA damage signals to downstream effectors of cell-cycle progression. May recognize the substrate consensus sequence [ST]-Q and phosphorylate histone variant H2AX to form H2AXS139ph at sites of DNA damage, thereby regulating DNA damage response mechanism. The sequence is that of Serine/threonine-protein kinase ATR from Oryza sativa subsp. japonica (Rice).